The primary structure comprises 538 residues: Solute carrier family 2, facilitated glucose transporter member 9 (538 aa).

The Cytoplasmic portion of the chain corresponds to 1-34 (MDSRELALASLMCDTGGPGELSVGHQQRRTKKWS). The residue at position 3 (Ser-3) is a Phosphoserine. Residues 35–54 (FSLVVAALVGAFGSSFLYGY) form a helical membrane-spanning segment. N-linked (GlcNAc...) asparagine glycosylation is found at Asn-55 and Asn-71. Residues 55-88 (NLSVVNAPTPYIKAFYNGTWYRRHGQPIDPDTLT) are Extracellular-facing. Residues 89–109 (LLWSVTVSIFAIGGLVGTLMV) traverse the membrane as a helical segment. Over 110 to 120 (KMIGKFLGRKS) the chain is Cytoplasmic. Residues 121–143 (TLLVNNGFAISAALLMACSLRAG) form a helical membrane-spanning segment. The Extracellular portion of the chain corresponds to 144–148 (TFEML). The chain crosses the membrane as a helical span at residues 149–170 (IVGRFIMGVDGGIALSALPMYL). The Cytoplasmic portion of the chain corresponds to 171-181 (NEISPKEIRGS). A helical transmembrane segment spans residues 182–200 (LGQVTAIFICIGVFSGQLL). Residues 201–211 (GLPELLGREST) are Extracellular-facing. The chain crosses the membrane as a helical span at residues 212-233 (WPYLFGVIIVPALVQLASLPFL). The Cytoplasmic segment spans residues 234–297 (PESPRYLLFE…LLRAPFVRWQ (64 aa)). A helical transmembrane segment spans residues 298–319 (VITVIITMASYQLCGLNAIWFY). Topologically, residues 320–333 (TNSIFGKAGIPQDK) are extracellular. The helical transmembrane segment at 334 to 356 (IPYITLSTGGIETLAAIFSGLVI) threads the bilayer. Topologically, residues 357 to 362 (ERLGRR) are cytoplasmic. Residues 363–385 (PLLIGGFGLMALFFGTLTATLTL) traverse the membrane as a helical segment. Over 386–390 (QDQAP) the chain is Extracellular. The helical transmembrane segment at 391–418 (WVPYLSIVCILAIIASFCSGPGGIPFIL) threads the bilayer. Over 419 to 429 (TGEFFQQSERP) the chain is Cytoplasmic. Residues 430-453 (AAFMIAGTVNWLSNFAVGLLFPFI) traverse the membrane as a helical segment. The Extracellular portion of the chain corresponds to 454 to 458 (QKSLD). The chain crosses the membrane as a helical span at residues 459–480 (SYCFLVFATICIAGATYFYFVL). At 481–538 (PETKNRTHAEISQAFAKRNKAQPPEVKADSAMTEEKANSQTEPDSSSTLDSYGQNKIV) the chain is on the cytoplasmic side. The segment at 495-538 (FAKRNKAQPPEVKADSAMTEEKANSQTEPDSSSTLDSYGQNKIV) is disordered. Positions 518 to 538 (NSQTEPDSSSTLDSYGQNKIV) are enriched in polar residues.

Belongs to the major facilitator superfamily. Sugar transporter (TC 2.A.1.1) family. Post-translationally, N-glycosylated. As to expression, highly expressed in the intestine, with high expression in the jejunum and ileum, the segments of the intestine that perform the majority of urate excretion. Isoform 1: Widely expressed. Isoform 1: In kidney, expressed at low levels in proximal tubules. Isoform 2: Primarily expressed in liver and kidney; with specific expression in distal convoluted and connecting tubules of kidney.

It localises to the basolateral cell membrane. It is found in the apical cell membrane. The catalysed reaction is urate(out) = urate(in). Its function is as follows. High-capacity urate transporter, which may play a role in the urate reabsorption by proximal tubules. May have a residual high-affinity, low-capacity glucose and fructose transporter activity. Transports urate at rates 45- to 60-fold faster than glucose. Does not transport galactose. May mediate small uptake of adenine but not of other nucleobases. This Mus musculus (Mouse) protein is Solute carrier family 2, facilitated glucose transporter member 9.